Here is a 155-residue protein sequence, read N- to C-terminus: Probable calcium-binding protein CML9 (155 aa).

EF-hand domains are found at residues 8–43 (EQVDECREIFDLFDSDEDGRIAAGELVTALRSLGQN), 86–121 (ATEKELAACLDVFDDARSGVIPAEQLRQAMVSHGDR), and 122–155 (LTEEEADEMVRKADPAGEGRVEYKEFVKVLMNNK). Asp-21, Asp-23, Asp-25, Arg-27, and Glu-32 together coordinate Ca(2+).

Potential calcium sensor. The polypeptide is Probable calcium-binding protein CML9 (CML9) (Oryza sativa subsp. japonica (Rice)).